The sequence spans 95 residues: Large ribosomal subunit protein eL37x (95 aa).

The Zn(2+) site is built by cysteine 19, cysteine 22, cysteine 34, and cysteine 37. A C4-type zinc finger spans residues cysteine 19 to cysteine 37. The segment at arginine 73 to alanine 95 is disordered. Over residues glycine 77 to proline 86 the composition is skewed to basic and acidic residues.

Belongs to the eukaryotic ribosomal protein eL37 family. Requires Zn(2+) as cofactor.

In terms of biological role, binds to the 23S rRNA. The polypeptide is Large ribosomal subunit protein eL37x (RPL37C) (Arabidopsis thaliana (Mouse-ear cress)).